The chain runs to 155 residues: Small ribosomal subunit protein uS7cz/uS7cy (155 aa).

This sequence belongs to the universal ribosomal protein uS7 family. In terms of assembly, part of the 30S ribosomal subunit.

The protein resides in the plastid. Its subcellular location is the chloroplast. One of the primary rRNA binding proteins, it binds directly to 16S rRNA where it nucleates assembly of the head domain of the 30S subunit. This chain is Small ribosomal subunit protein uS7cz/uS7cy (rps7-A), found in Phaseolus vulgaris (Kidney bean).